Reading from the N-terminus, the 415-residue chain is Small RNA 2'-O-methyltransferase (415 aa).

S-adenosyl-L-methionine is bound by residues serine 99 and aspartate 117. Mg(2+) is bound by residues glutamate 169, glutamate 172, and histidine 173.

This sequence belongs to the methyltransferase superfamily. HEN1 family. Requires Mg(2+) as cofactor.

It localises to the cytoplasm. The catalysed reaction is small RNA 3'-end nucleotide + S-adenosyl-L-methionine = small RNA 3'-end 2'-O-methylnucleotide + S-adenosyl-L-homocysteine + H(+). Functionally, methyltransferase that adds a 2'-O-methyl group at the 3'-end of piRNAs, a class of 24 to 30 nucleotide RNAs that are generated by a Dicer-independent mechanism and are primarily derived from transposons and other repeated sequence elements. This probably protects the 3'-end of piRNAs from uridylation activity and subsequent degradation. Stabilization of piRNAs is essential for gametogenesis. The chain is Small RNA 2'-O-methyltransferase from Bombyx mori (Silk moth).